Consider the following 411-residue polypeptide: Prostaglandin E2 receptor EP3 subtype (411 aa).

Topologically, residues 1–49 (MKETRGDGGSAPFCTRLNHSYPGMWAPEARGNLTRPPGPGEDCGSVSVA) are extracellular. N-linked (GlcNAc...) asparagine glycans are attached at residues Asn-18 and Asn-32. A helical transmembrane segment spans residues 50-74 (FPITMLITGFVGNALAMLLVSRSYR). Residues 75–87 (RRESKRKKSFLLC) lie on the Cytoplasmic side of the membrane. Residues 88–108 (IGWLALTDLVGQLLTSPVVIL) traverse the membrane as a helical segment. The Extracellular segment spans residues 109–127 (VYLSKQRWEQLDPSGRLCT). Residues Cys-126 and Cys-204 are joined by a disulfide bond. The chain crosses the membrane as a helical span at residues 128–149 (FFGLTMTVFGLSSLFIASAMAV). At 150–171 (ERALAIRAPHWYASHMKTRATR) the chain is on the cytoplasmic side. The helical transmembrane segment at 172-193 (AVLLGVWLAVLAFALLPVLGVG) threads the bilayer. At 194–223 (QYTIQWPGTWCFISTGRGDNGTSSSHNWGN) the chain is on the extracellular side. N-linked (GlcNAc...) asparagine glycosylation occurs at Asn-213. Residues 224-249 (LFFASTFAFLGLLALAITFTCNLATI) traverse the membrane as a helical segment. Over 250-279 (KALVSRCRAKAAASQSSAQWGRITTETAIQ) the chain is Cytoplasmic. Residues 280-303 (LMGIMCVLSVCWSPLLIMMLKMIF) traverse the membrane as a helical segment. Over 304–323 (NQTSVEHCKTDTGKQKECNF) the chain is Extracellular. Residues 324 to 345 (FLIAVRLASLNQILDPWVYLLL) traverse the membrane as a helical segment. The Cytoplasmic segment spans residues 346-411 (RKILLRKFCQ…ADPGARPYQQ (66 aa)). The span at 367–390 (IQRENRNVSHSGQHEEARDSEKSK) shows a compositional bias: basic and acidic residues. The interval 367–392 (IQRENRNVSHSGQHEEARDSEKSKTI) is disordered.

This sequence belongs to the G-protein coupled receptor 1 family. Interacts (via C-terminus) with MKLN1. As to expression, in the kidney cortex and medulla, adrenal gland and stomach. In kidney, expression is higher in tubules in the outer medulla, with lower levels in cortex. In kidney cortex, expression is restricted to distal tubules.

Its subcellular location is the cell membrane. In terms of biological role, receptor for prostaglandin E2 (PGE2). Required for normal development of fever in response to pyrinogens, including IL1B, prostaglandin E2 and bacterial lipopolysaccharide (LPS). Required for normal potentiation of platelet aggregation by prostaglandin E2, and thus plays a role in the regulation of blood coagulation. Required for increased HCO3(-) secretion in the duodenum in response to mucosal acidification, and thereby contributes to the protection of the mucosa against acid-induced ulceration. Not required for normal kidney function, normal urine volume and osmolality. The protein is Prostaglandin E2 receptor EP3 subtype (PTGER3) of Oryctolagus cuniculus (Rabbit).